The primary structure comprises 602 residues: Chaperone protein DnaK (602 aa).

At T199 the chain carries Phosphothreonine; by autocatalysis.

The protein belongs to the heat shock protein 70 family.

Acts as a chaperone. This chain is Chaperone protein DnaK, found in Carsonella ruddii (strain PV).